A 326-amino-acid polypeptide reads, in one-letter code: Ribosomal RNA small subunit methyltransferase H (326 aa).

S-adenosyl-L-methionine is bound by residues 35–37, aspartate 53, phenylalanine 80, aspartate 101, and glutamine 108; that span reads GGY. Residues 260-306 are disordered; that stretch reads EGVSRHLPQASNAGAGNPPPSFQAVSRRAVKPLDAETRVNPRSRSAR.

It belongs to the methyltransferase superfamily. RsmH family.

Its subcellular location is the cytoplasm. The enzyme catalyses cytidine(1402) in 16S rRNA + S-adenosyl-L-methionine = N(4)-methylcytidine(1402) in 16S rRNA + S-adenosyl-L-homocysteine + H(+). Functionally, specifically methylates the N4 position of cytidine in position 1402 (C1402) of 16S rRNA. This is Ribosomal RNA small subunit methyltransferase H from Rhodospirillum rubrum (strain ATCC 11170 / ATH 1.1.1 / DSM 467 / LMG 4362 / NCIMB 8255 / S1).